Here is a 154-residue protein sequence, read N- to C-terminus: Small heat shock protein IbpB (154 aa).

The 112-residue stretch at 26-137 (GQEPQGFPPY…QPQRIAIGSA (112 aa)) folds into the sHSP domain.

Belongs to the small heat shock protein (HSP20) family. In terms of assembly, homodimer. Forms homomultimers of about 100-150 subunits at optimal growth temperatures. Conformation changes to oligomers at high temperatures or high ionic concentrations. The decrease in size of the multimers is accompanied by an increase in chaperone activity.

The protein resides in the cytoplasm. Associates with aggregated proteins, together with IbpA, to stabilize and protect them from irreversible denaturation and extensive proteolysis during heat shock and oxidative stress. Aggregated proteins bound to the IbpAB complex are more efficiently refolded and reactivated by the ATP-dependent chaperone systems ClpB and DnaK/DnaJ/GrpE. Its activity is ATP-independent. This chain is Small heat shock protein IbpB, found in Yersinia pseudotuberculosis serotype O:1b (strain IP 31758).